Here is a 282-residue protein sequence, read N- to C-terminus: tRNA uridine(34) hydroxylase (282 aa).

The Rhodanese domain maps to 128–222; that stretch reads DGREVVMLDT…YFEEVGADHY (95 aa). The active-site Cysteine persulfide intermediate is Cys-182.

This sequence belongs to the TrhO family.

It carries out the reaction uridine(34) in tRNA + AH2 + O2 = 5-hydroxyuridine(34) in tRNA + A + H2O. Functionally, catalyzes oxygen-dependent 5-hydroxyuridine (ho5U) modification at position 34 in tRNAs. This is tRNA uridine(34) hydroxylase from Ralstonia nicotianae (strain ATCC BAA-1114 / GMI1000) (Ralstonia solanacearum).